A 194-amino-acid chain; its full sequence is Small ribosomal subunit protein eS7 (194 aa).

The protein belongs to the eukaryotic ribosomal protein eS7 family.

This chain is Small ribosomal subunit protein eS7 (RpS7), found in Drosophila melanogaster (Fruit fly).